Reading from the N-terminus, the 258-residue chain is Phosphoribosylformylglycinamidine synthase subunit PurQ (258 aa).

One can recognise a Glutamine amidotransferase type-1 domain in the interval 7 to 238 (IGILLMEGTN…QAMYLETEKD (232 aa)). Cys-97 (nucleophile) is an active-site residue. Active-site residues include His-220 and Glu-222.

Part of the FGAM synthase complex composed of 1 PurL, 1 PurQ and 2 PurS subunits.

The protein resides in the cytoplasm. The catalysed reaction is N(2)-formyl-N(1)-(5-phospho-beta-D-ribosyl)glycinamide + L-glutamine + ATP + H2O = 2-formamido-N(1)-(5-O-phospho-beta-D-ribosyl)acetamidine + L-glutamate + ADP + phosphate + H(+). It carries out the reaction L-glutamine + H2O = L-glutamate + NH4(+). The protein operates within purine metabolism; IMP biosynthesis via de novo pathway; 5-amino-1-(5-phospho-D-ribosyl)imidazole from N(2)-formyl-N(1)-(5-phospho-D-ribosyl)glycinamide: step 1/2. Its function is as follows. Part of the phosphoribosylformylglycinamidine synthase complex involved in the purines biosynthetic pathway. Catalyzes the ATP-dependent conversion of formylglycinamide ribonucleotide (FGAR) and glutamine to yield formylglycinamidine ribonucleotide (FGAM) and glutamate. The FGAM synthase complex is composed of three subunits. PurQ produces an ammonia molecule by converting glutamine to glutamate. PurL transfers the ammonia molecule to FGAR to form FGAM in an ATP-dependent manner. PurS interacts with PurQ and PurL and is thought to assist in the transfer of the ammonia molecule from PurQ to PurL. The polypeptide is Phosphoribosylformylglycinamidine synthase subunit PurQ (Thermoplasma volcanium (strain ATCC 51530 / DSM 4299 / JCM 9571 / NBRC 15438 / GSS1)).